A 447-amino-acid chain; its full sequence is MLENIRDAVRKFLTGSTPYEKAVDEFVKELQKSLISSDVNVKLVFSLTAKIKERLNKEKPPSVLERKEWFISIVYDELSKLFGGDKEPNVNPTKLPFIIMLVGVQGSGKTTTSGKLAYFYKRRGYKVGLVAADVYRPAAYDQLLQLGNQIGVPVYGEPNNQNAIEIAKKGVDTFVKNKMDIIIVDTAGRHGYGEETKLLEEMKEIYEALKPDDVILVIDASIGQKAYDLASRFHQASPIGSIIITKMDGTAKGGGALSAVAATGATIKFIGTGEKIDELEIFNAKRYVSRILGMGDIESILEKVKGLEEYEKIQKKMEDVMEGKGKLTLRDVYAQIMALRKMGPLSKVLQHIPGLGVMLPTPSEDQLKLGEEKIRRWLAALNSMTYKELENPSIIDKSRMRRIAEGSGLEVEDVRELLEWYNNMNKLLKMVKRRRGSIDKLFGGKIG.

GTP contacts are provided by residues 103 to 110 (GVQGSGKT), 185 to 189 (DTAGR), and 245 to 248 (TKMD).

The protein belongs to the GTP-binding SRP family. SRP54 subfamily. As to quaternary structure, part of the signal recognition particle protein translocation system, which is composed of SRP and FtsY. Archaeal SRP consists of a 7S RNA molecule of 300 nucleotides and two protein subunits: SRP54 and SRP19.

The protein localises to the cytoplasm. It carries out the reaction GTP + H2O = GDP + phosphate + H(+). In terms of biological role, involved in targeting and insertion of nascent membrane proteins into the cytoplasmic membrane. Binds to the hydrophobic signal sequence of the ribosome-nascent chain (RNC) as it emerges from the ribosomes. The SRP-RNC complex is then targeted to the cytoplasmic membrane where it interacts with the SRP receptor FtsY. The sequence is that of Signal recognition particle 54 kDa protein from Saccharolobus islandicus (strain M.16.27) (Sulfolobus islandicus).